A 490-amino-acid chain; its full sequence is Cytochrome P450 2C29 (490 aa).

The first 25 residues, 1–25, serve as a signal peptide directing secretion; the sequence is MDLVVFLALTLSCLILLSLWRQSSG. N6-acetyllysine occurs at positions 249, 252, and 375. Residue Cys435 participates in heme binding.

Belongs to the cytochrome P450 family. Requires heme as cofactor. As to expression, expressed in liver as well as in extrahepatic tissues including brain, kidney, lung, heart, and intestine.

The protein resides in the endoplasmic reticulum membrane. Its subcellular location is the microsome membrane. The enzyme catalyses an organic molecule + reduced [NADPH--hemoprotein reductase] + O2 = an alcohol + oxidized [NADPH--hemoprotein reductase] + H2O + H(+). It carries out the reaction (5Z,8Z,11Z,14Z)-eicosatetraenoate + reduced [NADPH--hemoprotein reductase] + O2 = 14,15-epoxy-(5Z,8Z,11Z)-eicosatrienoate + oxidized [NADPH--hemoprotein reductase] + H2O + H(+). It functions in the pathway lipid metabolism; arachidonate metabolism. A cytochrome P450 monooxygenase that selectively catalyzes the epoxidation of 14,15 double bond of (5Z,8Z,11Z,14Z)-eicosatetraenoic acid (arachidonate) forming 14,15-epoxyeicosatrienoic acid (14,15-EET) regioisomer. Mechanistically, uses molecular oxygen inserting one oxygen atom into a substrate, and reducing the second into a water molecule, with two electrons provided by NADPH via cytochrome P450 reductase (CPR; NADPH--hemoprotein reductase). The chain is Cytochrome P450 2C29 from Mus musculus (Mouse).